Here is a 420-residue protein sequence, read N- to C-terminus: Glucose-1-phosphate adenylyltransferase (420 aa).

Alpha-D-glucose 1-phosphate-binding positions include Tyr107, Gly172, 187 to 188 (EK), and Ser205.

This sequence belongs to the bacterial/plant glucose-1-phosphate adenylyltransferase family. In terms of assembly, homotetramer.

It carries out the reaction alpha-D-glucose 1-phosphate + ATP + H(+) = ADP-alpha-D-glucose + diphosphate. It functions in the pathway glycan biosynthesis; glycogen biosynthesis. Involved in the biosynthesis of ADP-glucose, a building block required for the elongation reactions to produce glycogen. Catalyzes the reaction between ATP and alpha-D-glucose 1-phosphate (G1P) to produce pyrophosphate and ADP-Glc. This is Glucose-1-phosphate adenylyltransferase from Rhizobium johnstonii (strain DSM 114642 / LMG 32736 / 3841) (Rhizobium leguminosarum bv. viciae).